Consider the following 240-residue polypeptide: Proteasome subunit alpha (240 aa).

Belongs to the peptidase T1A family. In terms of assembly, the 20S proteasome core is composed of 14 alpha and 14 beta subunits that assemble into four stacked heptameric rings, resulting in a barrel-shaped structure. The two inner rings, each composed of seven catalytic beta subunits, are sandwiched by two outer rings, each composed of seven alpha subunits. The catalytic chamber with the active sites is on the inside of the barrel. Has a gated structure, the ends of the cylinder being occluded by the N-termini of the alpha-subunits. Is capped by the proteasome-associated ATPase, ARC.

It localises to the cytoplasm. Its pathway is protein degradation; proteasomal Pup-dependent pathway. Its activity is regulated as follows. The formation of the proteasomal ATPase ARC-20S proteasome complex, likely via the docking of the C-termini of ARC into the intersubunit pockets in the alpha-rings, may trigger opening of the gate for substrate entry. Interconversion between the open-gate and close-gate conformations leads to a dynamic regulation of the 20S proteasome proteolysis activity. In terms of biological role, component of the proteasome core, a large protease complex with broad specificity involved in protein degradation. The sequence is that of Proteasome subunit alpha from Frankia casuarinae (strain DSM 45818 / CECT 9043 / HFP020203 / CcI3).